A 184-amino-acid chain; its full sequence is UPF0149 protein PSPTO_5224 (184 aa).

Belongs to the UPF0149 family.

The polypeptide is UPF0149 protein PSPTO_5224 (Pseudomonas syringae pv. tomato (strain ATCC BAA-871 / DC3000)).